Consider the following 236-residue polypeptide: DNA repair protein RecO (236 aa).

The protein belongs to the RecO family.

Functionally, involved in DNA repair and RecF pathway recombination. The polypeptide is DNA repair protein RecO (Rickettsia typhi (strain ATCC VR-144 / Wilmington)).